A 94-amino-acid polypeptide reads, in one-letter code: Co-chaperonin GroES (94 aa).

It belongs to the GroES chaperonin family. In terms of assembly, heptamer of 7 subunits arranged in a ring. Interacts with the chaperonin GroEL.

It localises to the cytoplasm. In terms of biological role, together with the chaperonin GroEL, plays an essential role in assisting protein folding. The GroEL-GroES system forms a nano-cage that allows encapsulation of the non-native substrate proteins and provides a physical environment optimized to promote and accelerate protein folding. GroES binds to the apical surface of the GroEL ring, thereby capping the opening of the GroEL channel. The polypeptide is Co-chaperonin GroES (Tetragenococcus halophilus (Pediococcus halophilus)).